Reading from the N-terminus, the 462-residue chain is NAD-capped RNA hydrolase NUDT12 (462 aa).

ANK repeat units lie at residues glutamate 11–asparagine 40, asparagine 45–isoleucine 74, and serine 78–leucine 98. Lysine 185 is modified (N6-succinyllysine). Positions 284 and 287 each coordinate Zn(2+). Lysine 292 carries the post-translational modification N6-succinyllysine. Positions 302 and 307 each coordinate Zn(2+). Substrate contacts are provided by residues tyrosine 318, alanine 354–phenylalanine 356, glutamate 370, glutamate 374, and glutamate 415. Residues proline 319–lysine 453 enclose the Nudix hydrolase domain. Residues alanine 354, glutamate 370, glutamate 374, and glutamate 415 each contribute to the Mg(2+) site. The Nudix box signature appears at glycine 355–glycine 376. Residues proline 460–leucine 462 carry the Microbody targeting signal motif.

The protein belongs to the Nudix hydrolase family. NudC subfamily. Homodimer. Homodimerization is essential for its catalytic activity and protein stability. Interacts (via ANK repeats) with BLMH. Requires Mg(2+) as cofactor. The cofactor is Zn(2+).

It is found in the cytoplasm. It localises to the peroxisome. Its subcellular location is the cytoplasmic granule. It carries out the reaction a 5'-end NAD(+)-phospho-ribonucleoside in mRNA + H2O = a 5'-end phospho-adenosine-phospho-ribonucleoside in mRNA + beta-nicotinamide D-ribonucleotide + 2 H(+). The catalysed reaction is NAD(+) + H2O = beta-nicotinamide D-ribonucleotide + AMP + 2 H(+). It catalyses the reaction NADH + H2O = reduced beta-nicotinamide D-ribonucleotide + AMP + 2 H(+). The enzyme catalyses NADPH + H2O = reduced beta-nicotinamide D-ribonucleotide + adenosine 2',5'-bisphosphate + 2 H(+). Its function is as follows. mRNA decapping enzyme that specifically removes the nicotinamide adenine dinucleotide (NAD) cap from a subset of mRNAs by hydrolyzing the diphosphate linkage to produce nicotinamide mononucleotide (NMN) and 5' monophosphate mRNA. The NAD-cap is present at the 5'-end of some RNAs; in contrast to the canonical N7 methylguanosine (m7G) cap, the NAD cap promotes mRNA decay. Preferentially acts on NAD-capped transcripts in response to nutrient stress. Also acts on free nicotinamide adenine dinucleotide molecules: hydrolyzes NAD(H) into NMN(H) and AMP, and NADPH into NMNH and 2',5'-ADP. May act to regulate the concentration of peroxisomal nicotinamide nucleotide cofactors required for oxidative metabolism in this organelle. Regulates the levels of circadian clock components PER1, PER2, PER3 and CRY2 in the liver. The chain is NAD-capped RNA hydrolase NUDT12 from Homo sapiens (Human).